We begin with the raw amino-acid sequence, 341 residues long: Trans-3-hydroxy-L-proline dehydratase (341 aa).

S90 functions as the Proton acceptor in the catalytic mechanism. Substrate-binding positions include 91–92, D252, and 257–258; these read GS and GT.

The protein belongs to the proline racemase family.

It carries out the reaction trans-3-hydroxy-L-proline = 1-pyrroline-2-carboxylate + H2O. Its function is as follows. Catalyzes the dehydration of trans-3-hydroxy-L-proline (t3LHyp) to Delta(1)-pyrroline-2-carboxylate (Pyr2C). May be involved in a degradation pathway of t3LHyp, which would allow L.aggregata to grow on t3LHyp as a sole carbon source. Displays neither proline racemase activity nor 4-hydroxyproline 2-epimerase activity. The polypeptide is Trans-3-hydroxy-L-proline dehydratase (Roseibium aggregatum (strain ATCC 25650 / DSM 13394 / JCM 20685 / NBRC 16684 / NCIMB 2208 / IAM 12614 / B1) (Stappia aggregata)).